The sequence spans 452 residues: MLRLLIGLLLMSFISLQSASWQEPLRVSIEFVDLPKKIIRFPAHDLQVGEFGFVVTKLSDYEIVNSEVVIIAVENGVATAKFRAFESMKQRHLPTPRMVARKGDLVYFRQFNNQAFLIAPNDELYEQIRATNTDINFISSDLLVTFLNGFDPKIANLRKACNVYSVGVIYIVTTNTLNILSCESFEILEKRELDTSGVTKTSTPFFSRVEGIDAGTLGKLFSGSQSKNYFAYYDALVKKEKRKEVRIKKREEKIDSREIKREIKQEAIKEPKKANQGTQNAPTLEEKNYQKAERKLDAKEERRYLRDERKKAKATKKAMEFEEREKEHDERDEQETEGRRKALEMDKGDKKEERVKPKENEREIKQEAIKEPSDGNNATQQGEKQNAPKENNAQKEENKPNSKEEKRRLKEEKKKAKAEQRAREFEQRAREHQERDEKELEERRKALEAGKK.

Residues glutamine 265–lysine 452 are disordered. Composition is skewed to basic and acidic residues over residues leucine 284 to lysine 310 and lysine 317 to serine 373. The span at aspartate 374–asparagine 391 shows a compositional bias: polar residues. A compositionally biased stretch (basic and acidic residues) spans asparagine 392–lysine 452.

Its subcellular location is the cell surface. In terms of biological role, binds plasminogen, specifically, and in a concentration and lysine-dependent manner. Plasminogen is the precursor of plasmin, a serine protease that cleaves fibrin, fibronectin, laminin and vitronectin. Acquisition of plasminogen/plasmin could enable H.pylori to degrade host components. The sequence is that of Plasminogen-binding protein PgbA (pgbA) from Helicobacter pylori (strain ATCC 700392 / 26695) (Campylobacter pylori).